The chain runs to 331 residues: Protein MGF 300-4L (331 aa).

The protein belongs to the asfivirus MGF 300 family.

The chain is Protein MGF 300-4L from African swine fever virus (isolate Tick/Malawi/Lil 20-1/1983) (ASFV).